Here is a 229-residue protein sequence, read N- to C-terminus: Orotate phosphoribosyltransferase (229 aa).

5-phospho-alpha-D-ribose 1-diphosphate contacts are provided by residues arginine 107, lysine 108, lysine 111, histidine 113, and glutamate 133–serine 141. Threonine 137 is a binding site for orotate.

Belongs to the purine/pyrimidine phosphoribosyltransferase family. PyrE subfamily. In terms of assembly, homodimer. The cofactor is Mg(2+).

The catalysed reaction is orotidine 5'-phosphate + diphosphate = orotate + 5-phospho-alpha-D-ribose 1-diphosphate. Its pathway is pyrimidine metabolism; UMP biosynthesis via de novo pathway; UMP from orotate: step 1/2. Functionally, catalyzes the transfer of a ribosyl phosphate group from 5-phosphoribose 1-diphosphate to orotate, leading to the formation of orotidine monophosphate (OMP). The protein is Orotate phosphoribosyltransferase of Rhizobium etli (strain CIAT 652).